Reading from the N-terminus, the 249-residue chain is Aspartate/glutamate leucyltransferase (249 aa).

The protein belongs to the R-transferase family. Bpt subfamily.

The protein localises to the cytoplasm. It carries out the reaction N-terminal L-glutamyl-[protein] + L-leucyl-tRNA(Leu) = N-terminal L-leucyl-L-glutamyl-[protein] + tRNA(Leu) + H(+). It catalyses the reaction N-terminal L-aspartyl-[protein] + L-leucyl-tRNA(Leu) = N-terminal L-leucyl-L-aspartyl-[protein] + tRNA(Leu) + H(+). Functions in the N-end rule pathway of protein degradation where it conjugates Leu from its aminoacyl-tRNA to the N-termini of proteins containing an N-terminal aspartate or glutamate. The protein is Aspartate/glutamate leucyltransferase of Xanthobacter autotrophicus (strain ATCC BAA-1158 / Py2).